The chain runs to 560 residues: Choline/ethanolamine transporter FLVCR1 (560 aa).

The segment at 1 to 43 (MARPDDEVGPAVAPGHPLGKGYLPVPKGAPDGEARLVPQNGPE) is disordered. At 1–92 (MARPDDEVGP…EDVPCPACPP (92 aa)) the chain is on the cytoplasmic side. The chain crosses the membrane as a helical span at residues 93–117 (RTALSPRRFVVLLIFSLYSLVNAFQ). The Extracellular segment spans residues 118 to 135 (WIQYSSISNVFEDFYEVS). A helical membrane pass occupies residues 136–163 (PLHINWLSMVYMVAYVPLIFPATWLLDT). Residues 164–165 (RG) are Cytoplasmic-facing. Residues 166 to 185 (LRLTALLGSGLNCLGAWVKC) traverse the membrane as a helical segment. Residues 186–192 (GSVQRHL) are Extracellular-facing. Residues 193–221 (FWVTMLGQILCSVAQVFILGLPSPVASVW) form a helical membrane-spanning segment. An ethanolamine-binding site is contributed by Q207. The Cytoplasmic segment spans residues 222-226 (FGPKE). Residues 227 to 252 (VSTACATAVLGNQLGTAVGFLLPPVL) form a helical membrane-spanning segment. Residues 253–270 (VPALGTQNSTGLLAHTQN) lie on the Extracellular side of the membrane. N-linked (GlcNAc...) asparagine glycosylation occurs at N270. The chain crosses the membrane as a helical span at residues 271–300 (NTDLLAHNINTMFYGTAFISTFLFFLTIIA). Residues 301–336 (FKEKPPLPPSQAQAVLRDSPPEEYSYKSSIWNLCRN) lie on the Cytoplasmic side of the membrane. The chain crosses the membrane as a helical span at residues 337-367 (IPFVLLLVSYGIMTGAFYSISTLLNQIILTY). Topologically, residues 368-371 (YVGE) are extracellular. A helical transmembrane segment spans residues 372-400 (EVNAGRIGLTLVVAGMVGSILCGLWLDYT). The Cytoplasmic segment spans residues 401–402 (KT). The chain crosses the membrane as a helical span at residues 403-425 (YKQTTLIVYVLSFIGMLIFTFTL). Residues 426–428 (NLG) lie on the Extracellular side of the membrane. A helical transmembrane segment spans residues 429–458 (YIIVVFFTGGILGFFMTGYLPLGFEFAVEI). Over 459–466 (TYPESEGM) the chain is Cytoplasmic. Residues 467-492 (SSGLLNTAAQILGIFFTLAQGKITTD) form a helical membrane-spanning segment. Ethanolamine is bound at residue Q476. Q476 contributes to the choline binding site. At 493 to 495 (YNS) the chain is on the extracellular side. A helical membrane pass occupies residues 496-518 (PEAGNIFLCAWMFVGIILTALIK). Residues 519-560 (SDLRRHNINTGLTNIDVKAVPVDSRVDPKPKVMVSIQSESSL) are Cytoplasmic-facing. Residue S542 is modified to Phosphoserine.

Belongs to the major facilitator superfamily. Feline leukemia virus subgroup C receptor (TC 2.A.1.28.1) family.

It localises to the cell membrane. Its subcellular location is the mitochondrion membrane. It catalyses the reaction choline(out) = choline(in). The catalysed reaction is ethanolamine(in) = ethanolamine(out). It carries out the reaction heme b(in) = heme b(out). Functionally, uniporter that mediates the transport of extracellular choline and ethanolamine into cells, thereby playing a key role in phospholipid biosynthesis. Choline and ethanolamine are the precursors of phosphatidylcholine and phosphatidylethanolamine, respectively, the two most abundant phospholipids. Transport is not coupled with proton transport and is exclusively driven by the choline (or ethanolamine) gradient across the plasma membrane. Also acts as a heme b transporter that mediates heme efflux from the cytoplasm to the extracellular compartment. In terms of biological role, uniporter that mediates the transport of extracellular choline and ethanolamine into cells. Choline and ethanolamine are the precursors of phosphatidylcholine and phosphatidylethanolamine, respectively, the two most abundant phospholipids. Transport is not coupled with proton transport and is exclusively driven by the choline (or ethanolamine) gradient across the plasma membrane. Also acts as a heme b transporter that mediates heme efflux from the cytoplasm to the extracellular compartment. Heme export depends on the presence of HPX and is required to maintain intracellular free heme balance, protecting cells from heme toxicity. Heme export provides protection from heme or ferrous iron toxicities in liver, brain, sensory neurons and during erythropoiesis, a process in which heme synthesis intensifies. Possibly export coproporphyrin and protoporphyrin IX, which are both intermediate products in the heme biosynthetic pathway. Does not export bilirubin. The molecular mechanism of heme transport, whether electrogenic, electroneutral or coupled to other ions, remains to be elucidated. Its function is as follows. Heme transporter that promotes heme efflux from the mitochondrion to the cytoplasm. Essential for erythroid differentiation. The chain is Choline/ethanolamine transporter FLVCR1 (Flvcr1) from Mus musculus (Mouse).